A 293-amino-acid chain; its full sequence is Probable endoribonuclease YicC (293 aa).

This sequence belongs to the YicC/YloC family. A divalent metal cation is required as a cofactor.

Negatively modulates sporulation, probably in response to nutrient conditions. Effects expression of sporulation regulator spo0A in an indirect manner, possibly via repression of the sinRR' operon. In terms of biological role, probably a ssRNA endonuclease. Its function is as follows. Might contribute to small RNA (sRNA) regulation. The sequence is that of Probable endoribonuclease YicC from Clostridioides difficile (strain 630) (Peptoclostridium difficile).